The following is a 170-amino-acid chain: Photosystem II extrinsic protein V (170 aa).

The first 33 residues, 1–33, serve as a signal peptide directing secretion; it reads MASLFASLGRSLIKLLIVLPVIIGLSISSPAMA. Cys-70, Cys-73, His-74, and His-125 together coordinate heme c.

It belongs to the cytochrome c family. PsbV subfamily. As to quaternary structure, PSII is composed of 1 copy each of membrane proteins PsbA, PsbB, PsbC, PsbD, PsbE, PsbF, PsbH, PsbI, PsbJ, PsbK, PsbL, PsbM, PsbT, PsbX, PsbY, Psb30/Ycf12, peripheral proteins PsbO, CyanoQ (PsbQ), PsbU, PsbV and a large number of cofactors. It forms dimeric complexes. Heme c serves as cofactor.

It localises to the cellular thylakoid membrane. In terms of biological role, one of the extrinsic, lumenal subunits of photosystem II (PSII). PSII is a light-driven water plastoquinone oxidoreductase, using light energy to abstract electrons from H(2)O, generating a proton gradient subsequently used for ATP formation. The extrinsic proteins stabilize the structure of photosystem II oxygen-evolving complex (OEC), the ion environment of oxygen evolution and protect the OEC against heat-induced inactivation. Low-potential cytochrome c that plays a role in the OEC of PSII. The polypeptide is Photosystem II extrinsic protein V (Prochlorococcus marinus (strain MIT 9303)).